The primary structure comprises 254 residues: Proteasome subunit alpha type-4 (254 aa).

The residue at position 60 (T60) is a Phosphothreonine. The segment at Q235–H254 is disordered. Residues E237 to K248 are compositionally biased toward basic and acidic residues.

This sequence belongs to the peptidase T1A family. In terms of assembly, the 26S proteasome consists of a 20S proteasome core and two 19S regulatory subunits. The 20S proteasome core is composed of 28 subunits that are arranged in four stacked rings, resulting in a barrel-shaped structure. The two end rings are each formed by seven alpha subunits, and the two central rings are each formed by seven beta subunits. The catalytic chamber with the active sites is on the inside of the barrel. Interacts with CIC1.

The protein resides in the cytoplasm. Its subcellular location is the nucleus. Its function is as follows. The proteasome degrades poly-ubiquitinated proteins in the cytoplasm and in the nucleus. It is essential for the regulated turnover of proteins and for the removal of misfolded proteins. The proteasome is a multicatalytic proteinase complex that is characterized by its ability to cleave peptides with Arg, Phe, Tyr, Leu, and Glu adjacent to the leaving group at neutral or slightly basic pH. It has an ATP-dependent proteolytic activity. The protein is Proteasome subunit alpha type-4 (PRE6) of Saccharomyces cerevisiae (strain ATCC 204508 / S288c) (Baker's yeast).